The sequence spans 433 residues: Malate synthase (433 aa).

16–17 serves as a coordination point for acetyl-CoA; the sequence is TS. Residue aspartate 52 coordinates Mg(2+). Arginine 84 contributes to the acetyl-CoA binding site. Residues arginine 84, glutamate 158, and 191 to 192 each bind glyoxylate; that span reads VD. Mg(2+)-binding residues include glutamate 158 and aspartate 192. Acetyl-CoA contacts are provided by arginine 236 and leucine 259. Aspartate 388 (proton acceptor) is an active-site residue.

The protein belongs to the HpcH/HpaI aldolase family. As to quaternary structure, homotrimer and homohexamer in equilibrium. It depends on Mg(2+) as a cofactor.

Its subcellular location is the cytoplasm. The enzyme catalyses glyoxylate + acetyl-CoA + H2O = (S)-malate + CoA + H(+). The protein operates within carbohydrate metabolism; glyoxylate cycle; (S)-malate from isocitrate: step 2/2. Functionally, involved in the glyoxylate cycle which synthesizes precursors for carbohydrates from C2 compounds such as acetate. Catalyzes the Claisen condensation between acetyl-coenzyme A (acetyl-CoA) and glyoxylate to form the malyl-CoA intermediate that is subsequently hydrolyzed to produce malate and CoA. This Haloferax volcanii (strain ATCC 29605 / DSM 3757 / JCM 8879 / NBRC 14742 / NCIMB 2012 / VKM B-1768 / DS2) (Halobacterium volcanii) protein is Malate synthase (aceB).